Consider the following 112-residue polypeptide: Prostatic steroid-binding protein C2 (112 aa).

Residues methionine 1–glycine 20 form the signal peptide. Glutamine 21 is modified (pyrrolidone carboxylic acid).

Belongs to the secretoglobin family. Lipophilin subfamily. Prostatein is composed of three different peptides called C1, C2 and C3. These form covalent C1:C3 (F) and C2:C3 (S) heterodimers whose noncovalent association forms tetrameric (C1:C3/C3:C2) prostatein molecules. In terms of processing, linked by three disulfide bonds to C3. The N-terminus is blocked.

It is found in the secreted. Functionally, part of prostatein which is the major secretory glycoprotein of ventral prostate gland. The protein is Prostatic steroid-binding protein C2 (Psbpc2) of Rattus norvegicus (Rat).